The primary structure comprises 314 residues: tRNA-cytidine(32) 2-sulfurtransferase (314 aa).

The PP-loop motif signature appears at 53 to 58 (SGGKDS). Residues C128, C131, and C219 each coordinate [4Fe-4S] cluster.

This sequence belongs to the TtcA family. In terms of assembly, homodimer. It depends on Mg(2+) as a cofactor. Requires [4Fe-4S] cluster as cofactor.

Its subcellular location is the cytoplasm. It carries out the reaction cytidine(32) in tRNA + S-sulfanyl-L-cysteinyl-[cysteine desulfurase] + AH2 + ATP = 2-thiocytidine(32) in tRNA + L-cysteinyl-[cysteine desulfurase] + A + AMP + diphosphate + H(+). Its pathway is tRNA modification. Functionally, catalyzes the ATP-dependent 2-thiolation of cytidine in position 32 of tRNA, to form 2-thiocytidine (s(2)C32). The sulfur atoms are provided by the cysteine/cysteine desulfurase (IscS) system. This Colwellia psychrerythraea (strain 34H / ATCC BAA-681) (Vibrio psychroerythus) protein is tRNA-cytidine(32) 2-sulfurtransferase.